Reading from the N-terminus, the 390-residue chain is 3-ketoacyl-CoA thiolase (390 aa).

Cys95 acts as the Acyl-thioester intermediate in catalysis. Active-site proton acceptor residues include His346 and Cys376.

The protein belongs to the thiolase-like superfamily. Thiolase family. Heterotetramer of two alpha chains (FadB) and two beta chains (FadA).

Its subcellular location is the cytoplasm. It catalyses the reaction an acyl-CoA + acetyl-CoA = a 3-oxoacyl-CoA + CoA. It participates in lipid metabolism; fatty acid beta-oxidation. In terms of biological role, catalyzes the final step of fatty acid oxidation in which acetyl-CoA is released and the CoA ester of a fatty acid two carbons shorter is formed. This Acinetobacter baumannii (strain AB307-0294) protein is 3-ketoacyl-CoA thiolase.